A 92-amino-acid polypeptide reads, in one-letter code: Small ribosomal subunit protein uS19c (92 aa).

This sequence belongs to the universal ribosomal protein uS19 family.

It is found in the plastid. The protein localises to the chloroplast. Functionally, protein S19 forms a complex with S13 that binds strongly to the 16S ribosomal RNA. The sequence is that of Small ribosomal subunit protein uS19c from Lactuca sativa (Garden lettuce).